Here is a 1881-residue protein sequence, read N- to C-terminus: MVGRGASLCAVQPAVAECGPARETPPLEVSPRKRLPAGLDQDPCSSRPAPEGAGASAEQSHSAGGGGWCRHCHTKLVELKRQAWKLVSGPGTPLRDPCLSTLLLDKLPASGVQPACRPDTESRCDVCTTHLHQLTREALRLLQTPASHEDPNASRGGLAAPSSRDPPGPVGLMGRQPPVGPDRRKATAWPPGPSVQVSVAPAGLGGALSTVTIQAQQCLEGVWSLSRVNSFLPPTCLAEAAVAAVAVADTVRDCAPAAGPERMSKAWGRGAACTTALVTPAPGTSAGGSTGPSAAASFFIRAAQKLSLASKRKKHHPPPAPSTRGTSTYPTDFSGSLQLWPPPVPPCLLRAASKAKENPSSFGKVKVMLRIWPAQGVQRSAESTSFLKVDSRKKQVTLYDPAAGPPGCAGLRHAPTAPVPKMFAFDAIFPQDSEQAEVCSGTVADVLQSVVSGADGCIFSFGHMSLGKSYTMIGKDSSPQSLGIVPCAISWLFRLIDERKERLGTRFSIRVSAVEVCGHDQSLRDLLAEVASGSLQDTQSPGVYLREDPVCGTQLQNQNELRAPTAEKAAFYLDAALAARSTSRAGCGEEARRSSHMLFTLHVYQYRVEKCGQGGMSGGRSRLHLIDLGSCDAAVGRGGEASGGPLCLSLSALGSVILALVNGAKHVPYRDHRLTMLLRESLATTNCRTTMIAHISDSPAHHAETLSTVQLAARIHRLRRKKGKHASSSSGGESSCEEGRARRPPHLRPFHPRAVVLDPDRSAPGLSGDPDYSSSSEQSCDTVIYVGPGGMALSDRELTDNEGPPDFVPIIPALSRRRPSEGPRDADHFRCSTFAELQERLECIDGSEAFPGPQGGSDGAQASPARGGRKPSLPEATPSRKAVAPTVVTSCPRGSPGHDTHRSASDPSKTGTQSEQRVDGSRPEPPASDKTSGGGGRRPLPSPAPPPPRQPEAQGIPKEPGGEGTDSVLRTPPVGMSGQAALPPLLSDSAYLSPSARGRHLERGLLTTTVTLQQPVELNGEDELVFTVVEELPLGGLAGATRPSSLASMSSDCSLQALASGSRPVSIISSINDEFDAYTSQMSEGPGDPGEFPEGTAWAGGSPASSIGSWLSDVGVCLSESRGPTPQPPFSPNSAAGPGPPEFPTPGSSLEESKVRSSECGRPDNPGSARSLHPGEAVATTQTQPGREPWARSPHEVASAQTIHSSLPRKPRTTSTASRARPSRGPYSPGGLFEDPWLLRAEDCDTRQIASTGRAPSPTPGSPRLPETQMMLACAQRVVDGCEVASRMSRRPEAVARIPPLRRGATTLGVTTPAASCGDAPAEAVVHSGSLKTTSGSKKSVSPKGAFFPRPSGAGPPAPPVRKSSLEQSTALTPTQALGLTRAGAPSAFRGEEEARPSGRSDSSVPKATSSLKARAGKMDVPYRPSGHMSLERCEGLAHGSSKVRDVVGRPPRAVPRLGVPSASPPLGPAPACRNSPAKGVGATKPPAGGAKGRNLGPSTSRALGAPVKPLGPVAGKTAGGAVPGPRAAPRAVPGIGAKAGRGTIMGTKQAFRAAHSRVHELAASGSPSRGGLSWGSTDSDSGNDSGVNLAEERQPSSPALPSPYSKVTAPRRPQRYSSGHGSDNSSVLSGELPPAMGRTALFYHSGGSSGYESMIRDSEATGSASSAPDSMSESGTASLGARSRSLKSPKKRATGLQRRRLIPAPLPDAAALGRKPSLPGQWVDLPPPLAGSLKEPFEIKVYEIDDVERLQRHRLPLRENEAKPSQDAEKGPVCISSKLRLAERRQQRLQEVQAKRDHLCEELAETQGRLMVEPGRWLEQFEVDPELEPESAEYLVALEQATAALEQCVNLCKAHVMMVTCFDIGVAATTAVPGPQEVDV.

Disordered regions lie at residues 20–66 (PARE…AGGG), 145–193 (PASH…PPGP), and 309–330 (ASKRKKHHPPPAPSTRGTSTYP). Ser30 is modified (phosphoserine). In terms of domain architecture, Kinesin motor spans 364 to 718 (KVKVMLRIWP…VQLAARIHRL (355 aa)). Residue 462–469 (GHMSLGKS) participates in ATP binding. Disordered stretches follow at residues 718 to 778 (LRRK…SSEQ), 794 to 827 (SDRELTDNEGPPDFVPIIPALSRRRPSEGPRDAD), 846 to 982 (GSEA…QAAL), 1078 to 1104 (YTSQMSEGPGDPGEFPEGTAWAGGSPA), 1118 to 1266 (LSES…PRLP), 1328 to 1425 (SGSL…PYRP), 1442 to 1633 (SKVR…SGEL), and 1652 to 1698 (YESM…TGLQ). Residues 742–751 (RRPPHLRPFH) show a composition bias toward basic residues. Residues 818–827 (RPSEGPRDAD) are compositionally biased toward basic and acidic residues. Residues 905–915 (SDPSKTGTQSE) show a composition bias toward polar residues. The span at 940–950 (LPSPAPPPPRQ) shows a compositional bias: pro residues. The span at 1084–1095 (EGPGDPGEFPEG) shows a compositional bias: low complexity. Basic and acidic residues predominate over residues 1151–1162 (EESKVRSSECGR). Ser1257 carries the phosphoserine modification. Positions 1328-1353 (SGSLKTTSGSKKSVSPKGAFFPRPSG) are enriched in low complexity. Residues 1366 to 1378 (LEQSTALTPTQAL) are compositionally biased toward polar residues. The span at 1390-1399 (RGEEEARPSG) shows a compositional bias: basic and acidic residues. Polar residues predominate over residues 1400 to 1412 (RSDSSVPKATSSL). 3 stretches are compositionally biased toward low complexity: residues 1477–1489 (PAKGVGATKPPAG), 1524–1537 (PGPRAAPRAVPGIG), and 1575–1587 (WGSTDSDSGNDSG). A compositionally biased stretch (polar residues) spans 1616–1629 (RYSSGHGSDNSSVL). Ser1654 carries the phosphoserine modification. Over residues 1664 to 1675 (SASSAPDSMSES) the composition is skewed to low complexity. Basic residues predominate over residues 1685-1698 (RSLKSPKKRATGLQ). Positions 1780–1812 (LRLAERRQQRLQEVQAKRDHLCEELAETQGRLM) form a coiled coil.

Belongs to the TRAFAC class myosin-kinesin ATPase superfamily. Kinesin family. KIF26 subfamily. As to quaternary structure, interacts with GRB2 (via SH2 domain). In terms of tissue distribution, expressed in several neuronal populations.

The protein localises to the cytoplasm. Its subcellular location is the cytoskeleton. Its function is as follows. Atypical kinesin that plays a key role in enteric neuron development. Acts by repressing a cell growth signaling pathway in the enteric nervous system development, possibly via its interaction with GRB2 that prevents GRB2-binding to SHC, thereby attenating the GDNF-Ret signaling. Binds to microtubules but lacks microtubule-based motility due to the absence of ATPase activity. Plays a critical role in cerebral cortical development. It probably acts as a microtubule stabilizer that regulates neurite growth and radial migration of cortical excitatory neurons. The protein is Kinesin-like protein KIF26A (Kif26a) of Mus musculus (Mouse).